The sequence spans 89 residues: Small ribosomal subunit protein uS15 (89 aa).

Residues 1 to 10 (MSITAERKAE) are compositionally biased toward basic and acidic residues. The tract at residues 1–24 (MSITAERKAEVIQGNANKAGDTGS) is disordered.

The protein belongs to the universal ribosomal protein uS15 family. In terms of assembly, part of the 30S ribosomal subunit. Forms a bridge to the 50S subunit in the 70S ribosome, contacting the 23S rRNA.

Its function is as follows. One of the primary rRNA binding proteins, it binds directly to 16S rRNA where it helps nucleate assembly of the platform of the 30S subunit by binding and bridging several RNA helices of the 16S rRNA. Functionally, forms an intersubunit bridge (bridge B4) with the 23S rRNA of the 50S subunit in the ribosome. The protein is Small ribosomal subunit protein uS15 of Rhodopseudomonas palustris (strain HaA2).